The primary structure comprises 601 residues: Potassium channel KAT2 (601 aa).

Over 1 to 42 (METISNIFHNDPLPPLGARANQSIKLRKFIISPYDSRYRTWE) the chain is Cytoplasmic. The chain crosses the membrane as a helical span at residues 43-63 (TFLLVLVVYSAWICPFELAYL). Residues 64–71 (RNLSWKVS) lie on the Extracellular side of the membrane. Residues 72 to 92 (LVDNIIDSFFAIDIILTFFLA) traverse the membrane as a helical segment. The Cytoplasmic segment spans residues 93–112 (YLDQKSYLLVDDPKRIVARY). The chain crosses the membrane as a helical span at residues 113-133 (FSSWFLFDVCSTIPYQLLGQI). Topologically, residues 134–144 (FKKHENGLAYR) are extracellular. Residues 145-165 (LLSMLRLWRLRRLSELFARLE) form a helical; Voltage-sensor membrane-spanning segment. At 166 to 179 (KDIRLNYYWIRCTK) the chain is on the cytoplasmic side. The helical transmembrane segment at 180–200 (LISVTLFAVHCSGCFNYLIAD) threads the bilayer. Over 201–227 (RYPNPARTWIGAAIPNYRSQNLWVRYV) the chain is Extracellular. The pore-forming intramembrane region spans 228 to 247 (TAIYWSITTLTTTGYGDLHA). Residues 248 to 251 (ENQR) are Extracellular-facing. The helical transmembrane segment at 252–272 (EMLFSICYMLFNLGLTAYLIG) threads the bilayer. The Cytoplasmic segment spans residues 273–601 (NMTNLVVQGS…DGDHLFFMEI (329 aa)). A nucleoside 3',5'-cyclic phosphate is bound at residue 356 to 475 (LFHGVSFTCM…RVILNNLSQK (120 aa)). The KHA domain maps to 530–601 (RVTIHMYSQR…DGDHLFFMEI (72 aa)).

The protein belongs to the potassium channel family. Plant (TC 1.A.1.4) subfamily.

It is found in the membrane. Probable inward-rectifying potassium channel. Assuming opened or closed conformations in response to the voltage difference across the membrane, the channel is activated by hyperpolarization. The protein is Potassium channel KAT2 of Oryza sativa subsp. japonica (Rice).